We begin with the raw amino-acid sequence, 389 residues long: Aspartic protease pepA (389 aa).

Residues 1–20 form the signal peptide; sequence MVLINQLGAVLAVCATLTVA. The propeptide at 21–67 is activation peptide; it reads APTKGKARFNVPQVAIPKKMVHHPAVSYARALHKFGMKVPKTVQDAA. The Peptidase A1 domain maps to 82–386; the sequence is YVTQVTVGEG…DTQGPRIGFA (305 aa). Residue D98 is part of the active site. N-linked (GlcNAc...) asparagine glycosylation occurs at N257. D279 is an active-site residue. Cysteines 315 and 348 form a disulfide.

Belongs to the peptidase A1 family. Monomer.

The protein resides in the secreted. Secreted aspartic endopeptidase that allows assimilation of proteinaceous substrates. The scissile peptide bond is attacked by a nucleophilic water molecule activated by two aspartic residues in the active site. Shows a broad primary substrate specificity. Favors hydrophobic residues at the P1 and P1' positions. The protein is Aspartic protease pepA of Arthroderma otae (strain ATCC MYA-4605 / CBS 113480) (Microsporum canis).